The following is a 77-amino-acid chain: Acyl carrier protein (77 aa).

The Carrier domain occupies 2–77 (ADTLSRITKI…DVVEYIEGRQ (76 aa)). Residue serine 37 is modified to O-(pantetheine 4'-phosphoryl)serine.

Belongs to the acyl carrier protein (ACP) family. In terms of processing, 4'-phosphopantetheine is transferred from CoA to a specific serine of apo-ACP by AcpS. This modification is essential for activity because fatty acids are bound in thioester linkage to the sulfhydryl of the prosthetic group.

It is found in the cytoplasm. The protein operates within lipid metabolism; fatty acid biosynthesis. Its function is as follows. Carrier of the growing fatty acid chain in fatty acid biosynthesis. The protein is Acyl carrier protein of Halalkalibacterium halodurans (strain ATCC BAA-125 / DSM 18197 / FERM 7344 / JCM 9153 / C-125) (Bacillus halodurans).